The sequence spans 396 residues: S-adenosylmethionine synthase (396 aa).

Position 16 (His-16) interacts with ATP. Residue Asp-18 participates in Mg(2+) binding. Glu-44 lines the K(+) pocket. L-methionine is bound by residues Glu-57 and Gln-100. Residues 100–110 (QSVDIAQGVDR) are flexible loop. ATP is bound by residues 165 to 167 (DAK), 231 to 232 (KF), Asp-240, 246 to 247 (RK), Ala-263, and Lys-267. Asp-240 serves as a coordination point for L-methionine. Lys-271 contributes to the L-methionine binding site.

Belongs to the AdoMet synthase family. In terms of assembly, homotetramer; dimer of dimers. Requires Mg(2+) as cofactor. The cofactor is K(+).

The protein resides in the cytoplasm. It catalyses the reaction L-methionine + ATP + H2O = S-adenosyl-L-methionine + phosphate + diphosphate. Its pathway is amino-acid biosynthesis; S-adenosyl-L-methionine biosynthesis; S-adenosyl-L-methionine from L-methionine: step 1/1. In terms of biological role, catalyzes the formation of S-adenosylmethionine (AdoMet) from methionine and ATP. The overall synthetic reaction is composed of two sequential steps, AdoMet formation and the subsequent tripolyphosphate hydrolysis which occurs prior to release of AdoMet from the enzyme. The protein is S-adenosylmethionine synthase of Marinobacter nauticus (strain ATCC 700491 / DSM 11845 / VT8) (Marinobacter aquaeolei).